Reading from the N-terminus, the 251-residue chain is NAD kinase (251 aa).

Asp51 acts as the Proton acceptor in catalysis. NAD(+) is bound by residues 51–52, Lys56, 113–114, Lys124, His140, Asp142, 153–158, and Ala177; these read DG, NE, and TGYSLS.

This sequence belongs to the NAD kinase family. It depends on a divalent metal cation as a cofactor.

It is found in the cytoplasm. It catalyses the reaction NAD(+) + ATP = ADP + NADP(+) + H(+). In terms of biological role, involved in the regulation of the intracellular balance of NAD and NADP, and is a key enzyme in the biosynthesis of NADP. Catalyzes specifically the phosphorylation on 2'-hydroxyl of the adenosine moiety of NAD to yield NADP. In Thermosipho melanesiensis (strain DSM 12029 / CIP 104789 / BI429), this protein is NAD kinase.